A 358-amino-acid polypeptide reads, in one-letter code: MRNVIKLTWSRRKRSASLDKGENIMKLAFAFATAAIVVAAAFPALADTLTVYSPQGGERGAWIAEQAKAAGHEIKLLNAGGGELYDRLIAEENNPQADVVLGMVDTSMALLKKEGLFQPYSPSWAKDLPAQYKDAEGLVHKFWQTPIVLAYYPDRLADPDAPKSWLDLTKDDYEGKYVIGSTAAQTTRMYLAGILVRFLDADGEVSDEGWDFLDRFYAEGIIANDADSQLEAFKSGRASIDLNWLGGALKRADDLDAKVQVIDTDGGTPVISEGVAIMAGTDQLDEAKAFVDWWGSADVMAAYAAKFGQVPVLPEALAKSPATVQANAKLVNTQPIDWDAIAPKLDSWLQKIELEIRQ.

The N-terminal stretch at 1–46 (MRNVIKLTWSRRKRSASLDKGENIMKLAFAFATAAIVVAAAFPALA) is a signal peptide.

The protein belongs to the bacterial solute-binding protein 1 family.

The protein resides in the periplasm. Probably part of the binding-protein-dependent transport system y4fNOP. The sequence is that of Probable ABC transporter periplasmic-binding protein y4fP from Sinorhizobium fredii (strain NBRC 101917 / NGR234).